Here is a 205-residue protein sequence, read N- to C-terminus: Guanylate kinase (205 aa).

A Guanylate kinase-like domain is found at 6-184; that stretch reads GLLIVLSGPA…AVERIKAIVT (179 aa). An ATP-binding site is contributed by 13 to 20; it reads GPAGVGKG.

The protein belongs to the guanylate kinase family.

The protein resides in the cytoplasm. The catalysed reaction is GMP + ATP = GDP + ADP. Functionally, essential for recycling GMP and indirectly, cGMP. This is Guanylate kinase from Shouchella clausii (strain KSM-K16) (Alkalihalobacillus clausii).